The sequence spans 225 residues: Sirohydrochlorin ferrochelatase, chloroplastic (225 aa).

A chloroplast-targeting transit peptide spans 1-46 (MTTQSQFLVNLSYGGLASQSNLRANNRVSPSSCQITRTNRSWALPV). Fe cation contacts are provided by His-89 and His-155. [4Fe-4S] cluster-binding residues include Cys-199, Cys-210, Cys-213, and Cys-219.

The protein belongs to the CbiX family. SirB subfamily. Homodimer. It depends on [4Fe-4S] cluster as a cofactor.

Its subcellular location is the plastid. The protein resides in the chloroplast. It carries out the reaction siroheme + 2 H(+) = sirohydrochlorin + Fe(2+). The protein operates within porphyrin-containing compound metabolism; siroheme biosynthesis; siroheme from sirohydrochlorin: step 1/1. In terms of biological role, chelates iron to the siroheme precursor. Catalyzes the last step of the siroheme biosynthesis. Unlike its counterparts in bacteria, contains an [Fe-S] cluster which is not involved directly in the enzymatic reaction, but may play regulatory role in iron, sulfur and tetrapyrrole metabolism. The [Fe-S] cluster is required for normal plant growth. The sequence is that of Sirohydrochlorin ferrochelatase, chloroplastic from Arabidopsis thaliana (Mouse-ear cress).